The sequence spans 123 residues: MSTNRRILTKKTENISNFINNYHSDVINEVEESITNNRVVVVGMAYNPHVSKVNKVLGEQGVQFKYLEYGSYFSMWSQRLSIKMFTGFPTYPQVFVDGTLIGGCDDTIKELNEGTLFNDLKKK.

Positions 27–123 constitute a Glutaredoxin domain; sequence INEVEESITN…GTLFNDLKKK (97 aa).

Belongs to the glutaredoxin family.

The chain is Glutaredoxin-like protein (grxB) from Dictyostelium discoideum (Social amoeba).